Consider the following 94-residue polypeptide: MPRSLKKGPFIDIHLLKKIQKSLKLTNKKSIRTWSRRSTIFPNMVGLTISIHNGRQHVPVFITEEMVGHKLGEFSITRTYRGHTADKKIKKPIK.

Belongs to the universal ribosomal protein uS19 family.

Its function is as follows. Protein S19 forms a complex with S13 that binds strongly to the 16S ribosomal RNA. The polypeptide is Small ribosomal subunit protein uS19 (Buchnera aphidicola subsp. Cinara cedri (strain Cc)).